A 291-amino-acid chain; its full sequence is 3-hydroxy-5-phosphonooxypentane-2,4-dione thiolase (291 aa).

Lysine 203 (schiff-base intermediate with substrate) is an active-site residue.

Belongs to the DeoC/FbaB aldolase family. In terms of assembly, homodecamer.

The protein localises to the cytoplasm. It catalyses the reaction dihydroxyacetone phosphate + acetyl-CoA = 3-hydroxy-2,4-dioxopentyl phosphate + CoA. In terms of biological role, involved in the degradation of phospho-AI-2, thereby terminating induction of the lsr operon and closing the AI-2 signaling cycle. Catalyzes the transfer of an acetyl moiety from 3-hydroxy-5-phosphonooxypentane-2,4-dione to CoA to form glycerone phosphate and acetyl-CoA. The chain is 3-hydroxy-5-phosphonooxypentane-2,4-dione thiolase from Yersinia pseudotuberculosis serotype O:1b (strain IP 31758).